Reading from the N-terminus, the 477-residue chain is AGFPEQEPEPKFWNDWAQKTLDKALSLQTLNKNKAQNLILFLGDGMGVPTVTAARILKGQLRGQPGEEGQLEMDKFPFVALSKTYNTNAQVADSAGTATAYLCGVKANEGTVGVSAAAVRSQANTTQGNEVTSILRWAKDAGKSIGIVTTTRVNHATPSAAYAHCVDRDWYSDNEMPADAVEAGCKDIARQLFENIPDIDVIMGGGRKYMYPKNTTDVEYPGQPKHSGTRKDGRNLVKEWVDRNTEKKGHYVWNKKDLLSLNPTKVDYLLGLFEPADLPYDLERNKETDPSLSEMVEVAIKILRRNPNGFYLLVEGGRIDHGHHEGKDKQAIHEAVEMDRAIGRADLMTSTSDTLTVVTADHSHLFSFGGYTPRGNEIFGLAAFISDVDQKPFTAILYGNGPGYKLVNGARENVSTVDYQDNSYLAQAAVPLSSETHGGEDVAVFAKGPMAHLLHGVHEQNYIPHAMAYAACIGQNR.

Position 44 (Asp44) interacts with Mg(2+). Asp44 contacts Zn(2+). Catalysis depends on Ser94, which acts as the Phosphoserine intermediate. Asn124 carries an N-linked (GlcNAc...) asparagine glycan. Residues His155 and Thr157 each coordinate Mg(2+). A disulfide bond links Cys165 and Cys185. Asn214 carries N-linked (GlcNAc...) asparagine glycosylation. A Mg(2+)-binding site is contributed by Glu315. Positions 320, 324, 361, and 362 each coordinate Zn(2+). Asn413 carries an N-linked (GlcNAc...) asparagine glycan. Position 437 (His437) interacts with Zn(2+).

Homodimer. Mg(2+) is required as a cofactor. It depends on Zn(2+) as a cofactor.

It is found in the cell membrane. The catalysed reaction is a phosphate monoester + H2O = an alcohol + phosphate. The sequence is that of Alkaline phosphatase from Gadus morhua (Atlantic cod).